Reading from the N-terminus, the 307-residue chain is Ribonuclease H2 subunit B (307 aa).

Alanine 2 is modified (N-acetylalanine). The residue at position 291 (lysine 291) is an N6-acetyllysine. Serine 292 carries the post-translational modification Phosphoserine.

It belongs to the RNase H2 subunit B family. In terms of assembly, the RNase H2 complex is a heterotrimer composed of the catalytic subunit RNASEH2A and the non-catalytic subunits RNASEH2B and RNASEH2C.

The protein localises to the nucleus. In terms of biological role, non catalytic subunit of RNase H2, an endonuclease that specifically degrades the RNA of RNA:DNA hybrids. Participates in DNA replication, possibly by mediating the removal of lagging-strand Okazaki fragment RNA primers during DNA replication. Mediates the excision of single ribonucleotides from DNA:RNA duplexes. The protein is Ribonuclease H2 subunit B (Rnaseh2b) of Rattus norvegicus (Rat).